A 256-amino-acid chain; its full sequence is Acetyl-coenzyme A carboxylase carboxyl transferase subunit alpha (256 aa).

Positions 1–236 (MTKITRIIKE…KEEIAAELDS (236 aa)) constitute a CoA carboxyltransferase C-terminal domain.

This sequence belongs to the AccA family. As to quaternary structure, acetyl-CoA carboxylase is a heterohexamer composed of biotin carboxyl carrier protein (AccB), biotin carboxylase (AccC) and two subunits each of ACCase subunit alpha (AccA) and ACCase subunit beta (AccD).

The protein resides in the cytoplasm. It catalyses the reaction N(6)-carboxybiotinyl-L-lysyl-[protein] + acetyl-CoA = N(6)-biotinyl-L-lysyl-[protein] + malonyl-CoA. It participates in lipid metabolism; malonyl-CoA biosynthesis; malonyl-CoA from acetyl-CoA: step 1/1. In terms of biological role, component of the acetyl coenzyme A carboxylase (ACC) complex. First, biotin carboxylase catalyzes the carboxylation of biotin on its carrier protein (BCCP) and then the CO(2) group is transferred by the carboxyltransferase to acetyl-CoA to form malonyl-CoA. This Streptococcus sanguinis (strain SK36) protein is Acetyl-coenzyme A carboxylase carboxyl transferase subunit alpha.